Here is a 401-residue protein sequence, read N- to C-terminus: Carbamoyl phosphate synthase small chain (401 aa).

Residues 1 to 203 are CPSase; that stretch reads MTETAPWTTR…KGYGTLGEAD (203 aa). 3 residues coordinate L-glutamine: S56, G255, and G257. In terms of domain architecture, Glutamine amidotransferase type-1 spans 207–395; that stretch reads HVVCVDFGVK…VNLLRENKGE (189 aa). The active-site Nucleophile is the C284. Residues L285, Q288, N326, G328, and F329 each coordinate L-glutamine. Residues H368 and E370 contribute to the active site.

This sequence belongs to the CarA family. Composed of two chains; the small (or glutamine) chain promotes the hydrolysis of glutamine to ammonia, which is used by the large (or ammonia) chain to synthesize carbamoyl phosphate. Tetramer of heterodimers (alpha,beta)4.

It carries out the reaction hydrogencarbonate + L-glutamine + 2 ATP + H2O = carbamoyl phosphate + L-glutamate + 2 ADP + phosphate + 2 H(+). It catalyses the reaction L-glutamine + H2O = L-glutamate + NH4(+). It participates in amino-acid biosynthesis; L-arginine biosynthesis; carbamoyl phosphate from bicarbonate: step 1/1. The protein operates within pyrimidine metabolism; UMP biosynthesis via de novo pathway; (S)-dihydroorotate from bicarbonate: step 1/3. Its function is as follows. Small subunit of the glutamine-dependent carbamoyl phosphate synthetase (CPSase). CPSase catalyzes the formation of carbamoyl phosphate from the ammonia moiety of glutamine, carbonate, and phosphate donated by ATP, constituting the first step of 2 biosynthetic pathways, one leading to arginine and/or urea and the other to pyrimidine nucleotides. The small subunit (glutamine amidotransferase) binds and cleaves glutamine to supply the large subunit with the substrate ammonia. The sequence is that of Carbamoyl phosphate synthase small chain from Agrobacterium fabrum (strain C58 / ATCC 33970) (Agrobacterium tumefaciens (strain C58)).